A 244-amino-acid polypeptide reads, in one-letter code: Phosphoadenosine 5'-phosphosulfate reductase (244 aa).

C239 serves as the catalytic Nucleophile; cysteine thiosulfonate intermediate.

Belongs to the PAPS reductase family. CysH subfamily.

The protein localises to the cytoplasm. It carries out the reaction [thioredoxin]-disulfide + sulfite + adenosine 3',5'-bisphosphate + 2 H(+) = [thioredoxin]-dithiol + 3'-phosphoadenylyl sulfate. It functions in the pathway sulfur metabolism; hydrogen sulfide biosynthesis; sulfite from sulfate: step 3/3. In terms of biological role, catalyzes the formation of sulfite from phosphoadenosine 5'-phosphosulfate (PAPS) using thioredoxin as an electron donor. This chain is Phosphoadenosine 5'-phosphosulfate reductase, found in Salmonella dublin (strain CT_02021853).